The chain runs to 190 residues: Holliday junction branch migration complex subunit RuvA (190 aa).

Residues 1–63 (MIRKINATIE…EWNTSLYIFK (63 aa)) form a domain I region. Positions 64 to 138 (DKIERDVFES…NSFSAYSTGA (75 aa)) are domain II. The tract at residues 138-142 (ADTQS) is flexible linker. Positions 143-190 (YGNNNLKEAIEALETLGFQRYEIMKVIGQLDLEDLKTEEIIKECLTRL) are domain III.

It belongs to the RuvA family. In terms of assembly, homotetramer. Forms an RuvA(8)-RuvB(12)-Holliday junction (HJ) complex. HJ DNA is sandwiched between 2 RuvA tetramers; dsDNA enters through RuvA and exits via RuvB. An RuvB hexamer assembles on each DNA strand where it exits the tetramer. Each RuvB hexamer is contacted by two RuvA subunits (via domain III) on 2 adjacent RuvB subunits; this complex drives branch migration. In the full resolvosome a probable DNA-RuvA(4)-RuvB(12)-RuvC(2) complex forms which resolves the HJ.

It is found in the cytoplasm. Functionally, the RuvA-RuvB-RuvC complex processes Holliday junction (HJ) DNA during genetic recombination and DNA repair, while the RuvA-RuvB complex plays an important role in the rescue of blocked DNA replication forks via replication fork reversal (RFR). RuvA specifically binds to HJ cruciform DNA, conferring on it an open structure. The RuvB hexamer acts as an ATP-dependent pump, pulling dsDNA into and through the RuvAB complex. HJ branch migration allows RuvC to scan DNA until it finds its consensus sequence, where it cleaves and resolves the cruciform DNA. The chain is Holliday junction branch migration complex subunit RuvA from Petrotoga mobilis (strain DSM 10674 / SJ95).